The chain runs to 161 residues: Arginine repressor (161 aa).

Belongs to the ArgR family.

The protein localises to the cytoplasm. It participates in amino-acid biosynthesis; L-arginine biosynthesis [regulation]. Its function is as follows. Regulates arginine biosynthesis genes. The protein is Arginine repressor of Corynebacterium aurimucosum (strain ATCC 700975 / DSM 44827 / CIP 107346 / CN-1) (Corynebacterium nigricans).